A 360-amino-acid chain; its full sequence is Photosystem II protein D1 (360 aa).

3 consecutive transmembrane segments (helical) span residues 29 to 46 (YIGW…TATS), 118 to 133 (HFLL…EWEF), and 142 to 156 (WISV…AASA). Residue H118 coordinates chlorophyll a. Position 126 (Y126) interacts with pheophytin a. Residues D170 and E189 each coordinate [CaMn4O5] cluster. Residues 197–218 (LHQLGVAGVFGGSLFSAMHGSL) traverse the membrane as a helical segment. Chlorophyll a is bound at residue H198. A quinone contacts are provided by residues H215 and 264 to 265 (SF). H215 provides a ligand contact to Fe cation. Fe cation is bound at residue H272. Residues 274–288 (FLGLWPVVGIWFTSM) traverse the membrane as a helical segment. [CaMn4O5] cluster-binding residues include H332, E333, D342, and A344. Residues 345 to 360 (SNESLPLALVAPAING) constitute a propeptide that is removed on maturation.

This sequence belongs to the reaction center PufL/M/PsbA/D family. In terms of assembly, PSII is composed of 1 copy each of membrane proteins PsbA, PsbB, PsbC, PsbD, PsbE, PsbF, PsbH, PsbI, PsbJ, PsbK, PsbL, PsbM, PsbT, PsbX, PsbY, PsbZ, Psb30/Ycf12, at least 3 peripheral proteins of the oxygen-evolving complex and a large number of cofactors. It forms dimeric complexes. The D1/D2 heterodimer binds P680, chlorophylls that are the primary electron donor of PSII, and subsequent electron acceptors. It shares a non-heme iron and each subunit binds pheophytin, quinone, additional chlorophylls, carotenoids and lipids. D1 provides most of the ligands for the Mn4-Ca-O5 cluster of the oxygen-evolving complex (OEC). There is also a Cl(-1) ion associated with D1 and D2, which is required for oxygen evolution. The PSII complex binds additional chlorophylls, carotenoids and specific lipids. is required as a cofactor. Post-translationally, tyr-161 forms a radical intermediate that is referred to as redox-active TyrZ, YZ or Y-Z. C-terminally processed by CTPA; processing is essential to allow assembly of the oxygen-evolving complex and thus photosynthetic growth.

The protein localises to the plastid. The protein resides in the chloroplast thylakoid membrane. It catalyses the reaction 2 a plastoquinone + 4 hnu + 2 H2O = 2 a plastoquinol + O2. Photosystem II (PSII) is a light-driven water:plastoquinone oxidoreductase that uses light energy to abstract electrons from H(2)O, generating O(2) and a proton gradient subsequently used for ATP formation. It consists of a core antenna complex that captures photons, and an electron transfer chain that converts photonic excitation into a charge separation. The D1/D2 (PsbA/PsbD) reaction center heterodimer binds P680, the primary electron donor of PSII as well as several subsequent electron acceptors. The protein is Photosystem II protein D1 of Antithamnion sp. (Red alga).